A 336-amino-acid chain; its full sequence is F420-dependent glucose-6-phosphate dehydrogenase (336 aa).

Asp-39 is a binding site for coenzyme F420-(gamma-Glu)n. His-40 serves as the catalytic Proton donor. Coenzyme F420-(gamma-Glu)n-binding positions include Thr-76 and 107–108 (TG). The active-site Proton acceptor is the Glu-109. Coenzyme F420-(gamma-Glu)n-binding positions include Asn-112, 177-178 (GG), and 180-181 (VV). Residues Thr-195, Lys-198, Lys-259, and Arg-283 each coordinate substrate.

The protein belongs to the F420-dependent glucose-6-phosphate dehydrogenase family. As to quaternary structure, homodimer.

It catalyses the reaction oxidized coenzyme F420-(gamma-L-Glu)(n) + D-glucose 6-phosphate + H(+) = 6-phospho-D-glucono-1,5-lactone + reduced coenzyme F420-(gamma-L-Glu)(n). Its function is as follows. Catalyzes the coenzyme F420-dependent oxidation of glucose 6-phosphate (G6P) to 6-phosphogluconolactone. Appears to have a role in resistance to oxidative stress, via its consumption of G6P that serves as a source of reducing power to combat oxidative stress in mycobacteria. The sequence is that of F420-dependent glucose-6-phosphate dehydrogenase from Mycolicibacterium fortuitum (Mycobacterium fortuitum).